Consider the following 497-residue polypeptide: tRNA (adenine(58)-N(1))-methyltransferase non-catalytic subunit TRM6 (497 aa).

The interval 81–103 (LEEPASETKEAGTDNRNIVDDGK) is disordered. The interval 95–105 (NRNIVDDGKSQ) is substrate. The residue at position 108 (Thr108) is a Phosphothreonine. Substrate regions lie at residues 146–155 (KYIKKKKKKY) and 176–183 (REPGKINH). The disordered stretch occupies residues 275-354 (MLSSEPKDST…EKQRRQEEQR (80 aa)). Residues 289 to 307 (SNGELEEKEIAEQADEDNI) show a composition bias toward acidic residues. Positions 328 to 354 (PENKEPKEKRSKRDYIQEKQRRQEEQR) are enriched in basic and acidic residues. The substrate site is built by Arg349 and Arg377. Substrate regions lie at residues 415 to 423 (RERGGVINL) and 434 to 441 (QVLPDRSH). Positions 474 to 497 (TGALDPHKAEEPAAKKQKCMESAS) are disordered. The span at 478–487 (DPHKAEEPAA) shows a compositional bias: basic and acidic residues.

The protein belongs to the TRM6/GCD10 family. As to quaternary structure, heterotetramer; composed of two copies of TRMT6 and two copies of TRMT61A.

It is found in the nucleus. Substrate-binding subunit of tRNA (adenine-N(1)-)-methyltransferase, which catalyzes the formation of N(1)-methyladenine at position 58 (m1A58) in initiator methionyl-tRNA. Together with the TRMT61A catalytic subunit, part of a mRNA N(1)-methyltransferase complex that mediates methylation of adenosine residues at the N(1) position of a small subset of mRNAs: N(1) methylation takes place in tRNA T-loop-like structures of mRNAs and is only present at low stoichiometries. The chain is tRNA (adenine(58)-N(1))-methyltransferase non-catalytic subunit TRM6 (Trmt6) from Mus musculus (Mouse).